We begin with the raw amino-acid sequence, 103 residues long: uncharacterized protein (103 aa).

This is an uncharacterized protein from Mycoplasma pneumoniae (strain ATCC 29342 / M129 / Subtype 1) (Mycoplasmoides pneumoniae).